Reading from the N-terminus, the 241-residue chain is Diacetyl reductase [(S)-acetoin forming] (241 aa).

Leucine 6–alanine 30 is an NAD(+) binding site. Substrate is bound at residue serine 139. Tyrosine 152 serves as the catalytic Proton acceptor. Lysine 156 is an active-site residue.

It belongs to the short-chain dehydrogenases/reductases (SDR) family. Homotetramer.

It catalyses the reaction (S)-acetoin + NAD(+) = diacetyl + NADH + H(+). Its function is as follows. Catalyzes the irreversible reduction of 2,3-butanediol to (S)-acetoin in the presence of NADH. This chain is Diacetyl reductase [(S)-acetoin forming] (budC), found in Raoultella terrigena (Klebsiella terrigena).